The sequence spans 112 residues: Colipase (112 aa).

Residues 1 to 17 form the signal peptide; it reads MEKVLILLLVALAVAYA. Positions 18–22 are cleaved as a propeptide — enterostatin, activation peptide; the sequence is VPDPR. Disulfide bonds link C34-C45, C40-C56, C44-C78, C66-C86, and C80-C104.

This sequence belongs to the colipase family. In terms of assembly, forms a 1:1 stoichiometric complex with pancreatic lipase.

Its subcellular location is the secreted. Functionally, colipase is a cofactor of pancreatic lipase. It allows the lipase to anchor itself to the lipid-water interface. Without colipase the enzyme is washed off by bile salts, which have an inhibitory effect on the lipase. Its function is as follows. Enterostatin has a biological activity as a satiety signal. The chain is Colipase (CLPS) from Bos taurus (Bovine).